Reading from the N-terminus, the 120-residue chain is Large ribosomal subunit protein uL18 (120 aa).

The protein belongs to the universal ribosomal protein uL18 family. In terms of assembly, part of the 50S ribosomal subunit; part of the 5S rRNA/L5/L18/L25 subcomplex. Contacts the 5S and 23S rRNAs.

In terms of biological role, this is one of the proteins that bind and probably mediate the attachment of the 5S RNA into the large ribosomal subunit, where it forms part of the central protuberance. The sequence is that of Large ribosomal subunit protein uL18 from Staphylococcus saprophyticus subsp. saprophyticus (strain ATCC 15305 / DSM 20229 / NCIMB 8711 / NCTC 7292 / S-41).